The primary structure comprises 429 residues: 3-phosphoshikimate 1-carboxyvinyltransferase (429 aa).

Residues Lys23, Ser24, and Arg28 each contribute to the 3-phosphoshikimate site. Position 23 (Lys23) interacts with phosphoenolpyruvate. 2 residues coordinate phosphoenolpyruvate: Gly95 and Arg123. 3-phosphoshikimate contacts are provided by Ser168, Gln170, Asp316, and Lys343. Phosphoenolpyruvate is bound at residue Gln170. Asp316 acts as the Proton acceptor in catalysis. Phosphoenolpyruvate is bound by residues Arg347 and Arg389.

This sequence belongs to the EPSP synthase family. Monomer.

The protein localises to the cytoplasm. The catalysed reaction is 3-phosphoshikimate + phosphoenolpyruvate = 5-O-(1-carboxyvinyl)-3-phosphoshikimate + phosphate. The protein operates within metabolic intermediate biosynthesis; chorismate biosynthesis; chorismate from D-erythrose 4-phosphate and phosphoenolpyruvate: step 6/7. Its function is as follows. Catalyzes the transfer of the enolpyruvyl moiety of phosphoenolpyruvate (PEP) to the 5-hydroxyl of shikimate-3-phosphate (S3P) to produce enolpyruvyl shikimate-3-phosphate and inorganic phosphate. This chain is 3-phosphoshikimate 1-carboxyvinyltransferase, found in Bacillus cereus (strain ZK / E33L).